Consider the following 270-residue polypeptide: Tetraspanin-18 (270 aa).

Residues 1–15 lie on the Cytoplasmic side of the membrane; it reads MRRNCCHVSFASTLK. A helical transmembrane segment spans residues 16–36; that stretch reads ILNFVQAFIGVSIIIYSIWML. Topologically, residues 37–99 are extracellular; sequence HEYSRHLPVD…LRSLDLPAPW (63 aa). The chain crosses the membrane as a helical span at residues 100–120; sequence FIYSFMAVGILVCIVTFIGFI. Topologically, residues 121-132 are cytoplasmic; that stretch reads AAEAINGCCLCF. A helical membrane pass occupies residues 133–153; the sequence is YSILKTLLILLEAALVAYIAI. Residues 154–183 are Extracellular-facing; that stretch reads DRHWEKDLPYDPTGELSSLRAFIEENIDIC. The helical transmembrane segment at 184-204 threads the bilayer; the sequence is KWVGIAVVAVQLLSLLLAMVL. At 205 to 270 the chain is on the cytoplasmic side; the sequence is RAMVSTPKPE…NQSPPVNPKG (66 aa). Residues 212-249 form a disordered region; the sequence is KPELDEEEDDENPRSRTWDPLLGPQGNQAPAGSSKIEN. Positions 236-249 are enriched in polar residues; the sequence is QGNQAPAGSSKIEN. The residue at position 245 (Ser245) is a Phosphoserine.

It belongs to the tetraspanin (TM4SF) family. Homodimer. Constituent of tobamovirus replication complex. As to expression, expressed in rosette leaves.

It localises to the membrane. It is found in the vacuole membrane. Functionally, may be involved in the regulation of cell differentiation. Promotes intracellular multiplication of tobamoviruses, probably being a component of the replication complex. The sequence is that of Tetraspanin-18 (TOM2AH2) from Arabidopsis thaliana (Mouse-ear cress).